Reading from the N-terminus, the 176-residue chain is Late lactation protein (176 aa).

Residues 1-18 (MKVLFFTIALSLFSILHA) form the signal peptide. A disulfide bridge links cysteine 78 with cysteine 171.

It belongs to the calycin superfamily. Lipocalin family. In terms of tissue distribution, mammary gland. Secreted in milk.

The protein resides in the secreted. In terms of biological role, probably serves a role in the transport of a small ligand released during the hydrolysis of milk fat. The polypeptide is Late lactation protein (Trichosurus vulpecula (Brush-tailed possum)).